Consider the following 540-residue polypeptide: Membrane protein insertase YidC (540 aa).

A helical membrane pass occupies residues 6–26; that stretch reads NILLIALALVSFLLFQQWQVA. A compositionally biased stretch (low complexity) spans 36–47; it reads QAQSSSSLPAPS. The disordered stretch occupies residues 36–63; it reads QAQSSSSLPAPSFADELDPVPGQQQASA. Transmembrane regions (helical) follow at residues 342–362, 417–437, 455–475, and 496–516; these read AFIQSFVGNWGVAIICLTFIV, LGGCLPLVLQMPIFIALYWAL, LSAQDPYYILPLLMGASMFLI, and PVMFTFFFLFFPSGLVLYWLV.

It belongs to the OXA1/ALB3/YidC family. Type 1 subfamily. Interacts with the Sec translocase complex via SecD. Specifically interacts with transmembrane segments of nascent integral membrane proteins during membrane integration.

Its subcellular location is the cell inner membrane. Functionally, required for the insertion and/or proper folding and/or complex formation of integral membrane proteins into the membrane. Involved in integration of membrane proteins that insert both dependently and independently of the Sec translocase complex, as well as at least some lipoproteins. Aids folding of multispanning membrane proteins. This Vibrio parahaemolyticus serotype O3:K6 (strain RIMD 2210633) protein is Membrane protein insertase YidC.